Consider the following 806-residue polypeptide: Plasminogen (806 aa).

The signal sequence occupies residues 1–19 (MEYGKVIFLFLLFLKSGQG). One can recognise a PAN domain in the interval 20–98 (ESLENYIKTE…RDVVLFEKRI (79 aa)). 21 cysteine pairs are disulfide-bonded: C49–C73, C53–C61, C103–C181, C124–C164, C152–C176, C185–C262, C188–C316, C206–C245, C234–C257, C275–C352, C296–C335, C324–C347, C371–C448, C392–C431, C420–C443, C476–C555, C497–C538, C526–C550, C563–C681, C573–C581, and C603–C619. Kringle domains lie at 102–181 (DCKS…VPEC), 184–262 (ECMH…IPRC), 274–352 (QCLK…IPSC), 370–448 (ECYE…LEKC), and 475–555 (DCMY…IPQC). One can recognise a Peptidase S1 domain in the interval 577–804 (IVGGCYAQPH…YISWIEDVMK (228 aa)). At S593 the chain carries Phosphoserine. Residues H618 and D661 each act as charge relay system in the active site. S684 is subject to Phosphoserine. 3 disulfide bridges follow: C695-C762, C725-C741, and C752-C780. The active-site Charge relay system is S756.

Belongs to the peptidase S1 family. Plasminogen subfamily. In terms of assembly, interacts with CSPG4 and AMOT. Interacts (via the Kringle domains) with HRG; the interaction tethers PLG to the cell surface and enhances its activation. Interacts (via Kringle 4 domain) with ADA; the interaction stimulates PLG activation when in complex with DPP4. Angiostatin: Interacts with ATP5F1A; the interaction inhibits most of the angiogenic effects of angiostatin. In terms of processing, in the presence of the inhibitor, the activation involves only cleavage after Arg-576, yielding two chains held together by two disulfide bonds. In the absence of the inhibitor, the activation involves additionally the removal of the activation peptide.

The protein resides in the secreted. The enzyme catalyses Preferential cleavage: Lys-|-Xaa &gt; Arg-|-Xaa, higher selectivity than trypsin. Converts fibrin into soluble products.. With respect to regulation, converted into plasmin by plasminogen activators, both plasminogen and its activator being bound to fibrin. Activated with catalytic amounts of streptokinase. Functionally, plasmin dissolves the fibrin of blood clots and acts as a proteolytic factor in a variety of other processes including embryonic development, tissue remodeling, tumor invasion, and inflammation. In ovulation, weakens the walls of the Graafian follicle. It activates the urokinase-type plasminogen activator, collagenases and several complement zymogens, such as C1, C4 and C5. Cleavage of fibronectin and laminin leads to cell detachment and apoptosis. Also cleaves fibrin, thrombospondin and von Willebrand factor. Its role in tissue remodeling and tumor invasion may be modulated by CSPG4. Binds to cells. This Notamacropus eugenii (Tammar wallaby) protein is Plasminogen (PLG).